We begin with the raw amino-acid sequence, 314 residues long: Bis(5'-nucleosyl)-tetraphosphatase, symmetrical (314 aa).

Residues 267–314 form a disordered region; sequence QVPGNPITHPPKTAQRPRQPRRRQRQRGGDQAQTGPAPTPASTGPAGG. Residues 297–314 show a composition bias toward low complexity; that stretch reads QAQTGPAPTPASTGPAGG.

The protein belongs to the Ap4A hydrolase family.

It catalyses the reaction P(1),P(4)-bis(5'-adenosyl) tetraphosphate + H2O = 2 ADP + 2 H(+). Functionally, hydrolyzes diadenosine 5',5'''-P1,P4-tetraphosphate to yield ADP. This chain is Bis(5'-nucleosyl)-tetraphosphatase, symmetrical, found in Xanthomonas axonopodis pv. citri (strain 306).